A 507-amino-acid chain; its full sequence is ATP synthase subunit alpha, chloroplastic (507 aa).

ATP is bound at residue 170 to 177; it reads GDRQTGKT.

The protein belongs to the ATPase alpha/beta chains family. As to quaternary structure, F-type ATPases have 2 components, CF(1) - the catalytic core - and CF(0) - the membrane proton channel. CF(1) has five subunits: alpha(3), beta(3), gamma(1), delta(1), epsilon(1). CF(0) has four main subunits: a, b, b' and c.

The protein resides in the plastid. It is found in the chloroplast thylakoid membrane. It catalyses the reaction ATP + H2O + 4 H(+)(in) = ADP + phosphate + 5 H(+)(out). Produces ATP from ADP in the presence of a proton gradient across the membrane. The alpha chain is a regulatory subunit. The sequence is that of ATP synthase subunit alpha, chloroplastic from Drimys granadensis.